The chain runs to 366 residues: Ribosomal RNA large subunit methyltransferase M (366 aa).

Residues Ser-188, 221 to 224, Asp-240, Asp-260, and Asp-277 contribute to the S-adenosyl-L-methionine site; that span reads CPGG. The active-site Proton acceptor is the Lys-306.

The protein belongs to the class I-like SAM-binding methyltransferase superfamily. RNA methyltransferase RlmE family. RlmM subfamily. In terms of assembly, monomer.

Its subcellular location is the cytoplasm. It carries out the reaction cytidine(2498) in 23S rRNA + S-adenosyl-L-methionine = 2'-O-methylcytidine(2498) in 23S rRNA + S-adenosyl-L-homocysteine + H(+). Its function is as follows. Catalyzes the 2'-O-methylation at nucleotide C2498 in 23S rRNA. The polypeptide is Ribosomal RNA large subunit methyltransferase M (Erwinia tasmaniensis (strain DSM 17950 / CFBP 7177 / CIP 109463 / NCPPB 4357 / Et1/99)).